The chain runs to 903 residues: Valine--tRNA ligase (903 aa).

The segment covering 1–15 (MVCVTDQNNETTSQN) has biased composition (polar residues). Positions 1-21 (MVCVTDQNNETTSQNRADKLP) are disordered. Residues 61–71 (PNVTGQLHMGH) carry the 'HIGH' region motif. Residues 552–556 (KMSKS) carry the 'KMSKS' region motif. Lys555 contributes to the ATP binding site. Positions 836–903 (TVDVAAERKR…RINKRLEELA (68 aa)) form a coiled coil.

It belongs to the class-I aminoacyl-tRNA synthetase family. ValS type 1 subfamily. As to quaternary structure, monomer.

The protein resides in the cytoplasm. It catalyses the reaction tRNA(Val) + L-valine + ATP = L-valyl-tRNA(Val) + AMP + diphosphate. In terms of biological role, catalyzes the attachment of valine to tRNA(Val). As ValRS can inadvertently accommodate and process structurally similar amino acids such as threonine, to avoid such errors, it has a 'posttransfer' editing activity that hydrolyzes mischarged Thr-tRNA(Val) in a tRNA-dependent manner. The polypeptide is Valine--tRNA ligase (Corynebacterium glutamicum (strain ATCC 13032 / DSM 20300 / JCM 1318 / BCRC 11384 / CCUG 27702 / LMG 3730 / NBRC 12168 / NCIMB 10025 / NRRL B-2784 / 534)).